Consider the following 460-residue polypeptide: ERAD-associated E3 ubiquitin-protein ligase HRD1B (460 aa).

Residues 1-3 lie on the Cytoplasmic side of the membrane; that stretch reads MIQ. The helical transmembrane segment at 4-24 threads the bilayer; the sequence is LKVYAGLSTLATLVVIYHAFS. Topologically, residues 25–40 are lumenal; sequence SRGQFYPATVYLSTSK. Residues 41 to 61 form a helical membrane-spanning segment; the sequence is INLVVLLNMGLVLMLSLWNLV. Over 62-98 the chain is Cytoplasmic; it reads KIVFLGSLREAEVERLNEQAWRELMEILFAITIFRQD. Residues 99–119 traverse the membrane as a helical segment; it reads FSVGFISLVVTLLLIKGLHWM. Over 120–140 the chain is Lumenal; the sequence is AQKRVEYIETTPSVTLLSHVR. A helical membrane pass occupies residues 141–161; that stretch reads IVSFMVFLLILDCLLTYSSIQ. Residues 162 to 170 are Cytoplasmic-facing; the sequence is QLIQSRKAS. Residues 171–191 traverse the membrane as a helical segment; that stretch reads MSVFFTFEYMILATTTVSIIV. Residues 192-225 are Lumenal-facing; the sequence is KYAFYVTDMLKEGQWEGKPVYTFYLELVRDLLHL. A helical transmembrane segment spans residues 226–246; that stretch reads SMYLCFFLMIFMNYGLPLHLI. Residues 247-460 lie on the Cytoplasmic side of the membrane; sequence RELYETFRNF…TKGKSVADTA (214 aa). The RING-type; atypical zinc finger occupies 292–330; it reads CIICREEMTSAKKLVCGHLFHVHCLRSWLERQNTCPTCR. A disordered region spans residues 339 to 378; sequence ATSTASGNRGPHQESLQQGTGTSSSDGQGSSVSAAASENM. Residues 353–375 are compositionally biased toward low complexity; sequence SLQQGTGTSSSDGQGSSVSAAAS.

This sequence belongs to the HRD1 family.

It localises to the endoplasmic reticulum membrane. It carries out the reaction S-ubiquitinyl-[E2 ubiquitin-conjugating enzyme]-L-cysteine + [acceptor protein]-L-lysine = [E2 ubiquitin-conjugating enzyme]-L-cysteine + N(6)-ubiquitinyl-[acceptor protein]-L-lysine.. The protein operates within protein modification; protein ubiquitination. Probable component of the HRD1 ubiquitin ligase complex that mediates the rapid degradation of misfolded endoplasmic reticulum (ER) proteins, a process called ER-associated degradation (ERAD). Targets the misfolded LRR receptor kinase BRI1. Functions redundantly with HRD3A. The protein is ERAD-associated E3 ubiquitin-protein ligase HRD1B of Arabidopsis thaliana (Mouse-ear cress).